The primary structure comprises 705 residues: Dynein axonemal intermediate chain 1 (705 aa).

Disordered regions lie at residues 1-44 (MPSK…AVRP) and 122-169 (AGSQ…DVPA). Residues Ser-124 and Ser-127 each carry the phosphoserine modification. The span at 124-135 (SQESVKVVTSDT) shows a compositional bias: polar residues. Residues 136-159 (EILEEEEEPKEGEGEGEGEAEGEA) are compositionally biased toward acidic residues. WD repeat units follow at residues 386 to 426 (SSES…SQPC), 435 to 478 (KHTD…LVHI), 543 to 583 (AHNM…PMFI), 585 to 625 (DLNA…YEAI), and 633 to 672 (KKKN…RKMP).

Belongs to the dynein intermediate chain family. As to quaternary structure, consists of at least two heavy chains and a number of intermediate and light chains. Interacts with BICD2. Interacts with CFAP45 and CFAP52. Interacts with CFAP53.

It localises to the cytoplasm. The protein localises to the cytoskeleton. The protein resides in the cilium axoneme. In terms of biological role, part of the dynein complex of respiratory cilia. This chain is Dynein axonemal intermediate chain 1 (Dnai1), found in Rattus norvegicus (Rat).